Consider the following 238-residue polypeptide: 2-C-methyl-D-erythritol 4-phosphate cytidylyltransferase (238 aa).

Belongs to the IspD/TarI cytidylyltransferase family. IspD subfamily.

The enzyme catalyses 2-C-methyl-D-erythritol 4-phosphate + CTP + H(+) = 4-CDP-2-C-methyl-D-erythritol + diphosphate. It participates in isoprenoid biosynthesis; isopentenyl diphosphate biosynthesis via DXP pathway; isopentenyl diphosphate from 1-deoxy-D-xylulose 5-phosphate: step 2/6. Catalyzes the formation of 4-diphosphocytidyl-2-C-methyl-D-erythritol from CTP and 2-C-methyl-D-erythritol 4-phosphate (MEP). The chain is 2-C-methyl-D-erythritol 4-phosphate cytidylyltransferase from Leptospira interrogans serogroup Icterohaemorrhagiae serovar copenhageni (strain Fiocruz L1-130).